The sequence spans 535 residues: T-complex protein 1 subunit beta (535 aa).

Alanine 2 carries the N-acetylalanine modification. Serine 3 is modified (phosphoserine). Lysine 13 bears the N6-acetyllysine mark. Glycine 44 provides a ligand contact to ADP. Glycine 44 contributes to the ATP binding site. Residue serine 60 is modified to Phosphoserine. A Mg(2+)-binding site is contributed by aspartate 97. ADP-binding residues include glycine 98, threonine 99, threonine 100, and serine 101. Residues glycine 98, threonine 99, and threonine 100 each contribute to the ATP site. Lysine 154 carries the N6-acetyllysine modification. The ADP site is built by serine 168 and serine 169. Lysine 181 carries the N6-acetyllysine modification. A Glycyl lysine isopeptide (Lys-Gly) (interchain with G-Cter in SUMO2) cross-link involves residue lysine 248. A Phosphoserine modification is found at serine 260. The residue at position 261 (threonine 261) is a Phosphothreonine. Positions 410, 495, and 500 each coordinate ADP. ATP is bound by residues glutamate 495 and lysine 500.

This sequence belongs to the TCP-1 chaperonin family. Component of the chaperonin-containing T-complex (TRiC), a hexadecamer composed of two identical back-to-back stacked rings enclosing a protein folding chamber. Each ring is made up of eight different subunits: TCP1/CCT1, CCT2, CCT3, CCT4, CCT5, CCT6A/CCT6, CCT7, CCT8. Interacts with PACRG. Interacts with FLCN. Interacts with DLEC1. Interacts with SVEP1.

The protein localises to the cytoplasm. The enzyme catalyses ATP + H2O = ADP + phosphate + H(+). In terms of biological role, component of the chaperonin-containing T-complex (TRiC), a molecular chaperone complex that assists the folding of actin, tubulin and other proteins upon ATP hydrolysis. The TRiC complex mediates the folding of WRAP53/TCAB1, thereby regulating telomere maintenance. As part of the TRiC complex may play a role in the assembly of BBSome, a complex involved in ciliogenesis regulating transports vesicles to the cilia. The sequence is that of T-complex protein 1 subunit beta (Cct2) from Rattus norvegicus (Rat).